The following is a 185-amino-acid chain: Pyruvate/ketoisovalerate oxidoreductases common subunit gamma (185 aa).

In terms of assembly, heterotetramer of one alpha, one beta, one delta and one gamma chain.

It catalyses the reaction 2 oxidized [2Fe-2S]-[ferredoxin] + pyruvate + CoA = 2 reduced [2Fe-2S]-[ferredoxin] + acetyl-CoA + CO2 + H(+). The catalysed reaction is 3-methyl-2-oxobutanoate + 2 oxidized [2Fe-2S]-[ferredoxin] + CoA = 2-methylpropanoyl-CoA + 2 reduced [2Fe-2S]-[ferredoxin] + CO2 + H(+). The polypeptide is Pyruvate/ketoisovalerate oxidoreductases common subunit gamma (porG) (Thermococcus kodakarensis (strain ATCC BAA-918 / JCM 12380 / KOD1) (Pyrococcus kodakaraensis (strain KOD1))).